Here is a 319-residue protein sequence, read N- to C-terminus: Ribonucleoside-diphosphate reductase small chain (319 aa).

Fe cation is bound by residues Asp-70, Glu-101, and His-104. The active site involves Tyr-108. Fe cation-binding residues include Glu-163, Glu-197, and His-200. The segment at 313 to 319 (FSLDVDF) is interaction with R1.

The protein belongs to the ribonucleoside diphosphate reductase small chain family. Interacts with RNR1/OPG080 subunit. Can interact with host RNR1 supunit. Fe cation is required as a cofactor.

The catalysed reaction is a 2'-deoxyribonucleoside 5'-diphosphate + [thioredoxin]-disulfide + H2O = a ribonucleoside 5'-diphosphate + [thioredoxin]-dithiol. In terms of biological role, ribonucleoside-diphosphate reductase holoenzyme provides the precursors necessary for viral DNA synthesis. Allows virus growth in non-dividing cells. Catalyzes the biosynthesis of deoxyribonucleotides from the corresponding ribonucleotides. This Vaccinia virus (strain L-IVP) (VACV) protein is Ribonucleoside-diphosphate reductase small chain (OPG048).